The chain runs to 307 residues: MASRDFLGGFGRDGGQAPVGGAGAAPGPGGESDEIELSLGLSLGGCFGAEPSQEGRSADPRLQRSSSVASICSLPAATTGTSCGAQDAGPGPAAAPPPDLLRTSSLPAEYMEDRLRRRAMQSQRRLEAKRKRLERRNSMSSGRPVPAAGGRDDGLEHTVPSGFQLRRSVALTTAGSPTPSRPQQGPADRRAAEATGPDGAACHDEPQPLPLRLRTLRSLTMRTASTGDLRSAMAEDMPMVSYKAEGPGGRKTDGFLYKYRKGEEVRIVCVCHGSFLTPAEFVEHAGGGEVPNPLRHIVVNPQQSVFL.

Disordered regions lie at residues 1–159 (MASR…EHTV) and 173–208 (TAGS…EPQP). Positions 8–30 (GGFGRDGGQAPVGGAGAAPGPGG) are enriched in gly residues. 2 stretches are compositionally biased toward polar residues: residues 63-83 (QRSS…GTSC) and 173-183 (TAGSPTPSRPQ).

This sequence belongs to the Ninja family.

It is found in the nucleus. This Zea mays (Maize) protein is Ninja-family protein 5.